A 208-amino-acid polypeptide reads, in one-letter code: ATP-dependent Clp protease proteolytic subunit (208 aa).

Residue Ser107 is the Nucleophile of the active site. His132 is an active-site residue.

This sequence belongs to the peptidase S14 family. Fourteen ClpP subunits assemble into 2 heptameric rings which stack back to back to give a disk-like structure with a central cavity, resembling the structure of eukaryotic proteasomes.

Its subcellular location is the cytoplasm. It catalyses the reaction Hydrolysis of proteins to small peptides in the presence of ATP and magnesium. alpha-casein is the usual test substrate. In the absence of ATP, only oligopeptides shorter than five residues are hydrolyzed (such as succinyl-Leu-Tyr-|-NHMec, and Leu-Tyr-Leu-|-Tyr-Trp, in which cleavage of the -Tyr-|-Leu- and -Tyr-|-Trp bonds also occurs).. Functionally, cleaves peptides in various proteins in a process that requires ATP hydrolysis. Has a chymotrypsin-like activity. Plays a major role in the degradation of misfolded proteins. In Methylorubrum extorquens (strain CM4 / NCIMB 13688) (Methylobacterium extorquens), this protein is ATP-dependent Clp protease proteolytic subunit.